The sequence spans 117 residues: Hemerythrin subunit beta (117 aa).

Fe cation contacts are provided by H24, H53, E57, H72, H76, H105, and D110.

The protein belongs to the hemerythrin family. In terms of assembly, octamer composed of two types of chains: alpha and beta.

Its function is as follows. Hemerythrin is a respiratory protein in blood cells of certain marine worms. The oxygen-binding site in each chain contains two iron atoms. This is Hemerythrin subunit beta from Lingula anatina (Brachiopod).